Consider the following 650-residue polypeptide: Chaperone protein DnaK (650 aa).

The residue at position 200 (Thr-200) is a Phosphothreonine; by autocatalysis. A compositionally biased stretch (low complexity) spans 613–634 (QAGAAGAAGAAAAEGAAQGGAQ). The segment at 613 to 637 (QAGAAGAAGAAAAEGAAQGGAQTAD) is disordered.

The protein belongs to the heat shock protein 70 family.

In terms of biological role, acts as a chaperone. The protein is Chaperone protein DnaK of Burkholderia thailandensis (strain ATCC 700388 / DSM 13276 / CCUG 48851 / CIP 106301 / E264).